Consider the following 377-residue polypeptide: D-alanine--D-alanine ligase (377 aa).

The ATP-grasp domain occupies 140-349 (KELLTVNGIR…NAKLVDMLID (210 aa)). Residue 170 to 225 (VAELGNIVFVKAANQGSSVGISRVTNAEEYTEALSDSFQYDYKVLIEEAVNGAREL) participates in ATP binding. Residues Asp-303, Glu-316, and Asn-318 each contribute to the Mg(2+) site.

Belongs to the D-alanine--D-alanine ligase family. Requires Mg(2+) as cofactor. Mn(2+) is required as a cofactor.

Its subcellular location is the cytoplasm. It carries out the reaction 2 D-alanine + ATP = D-alanyl-D-alanine + ADP + phosphate + H(+). Its pathway is cell wall biogenesis; peptidoglycan biosynthesis. In terms of biological role, cell wall formation. The sequence is that of D-alanine--D-alanine ligase from Leuconostoc mesenteroides.